Here is a 198-residue protein sequence, read N- to C-terminus: Recombination protein RecR (198 aa).

A C4-type zinc finger spans residues Cys57–Cys72. One can recognise a Toprim domain in the interval Ser80–Pro175.

This sequence belongs to the RecR family.

In terms of biological role, may play a role in DNA repair. It seems to be involved in an RecBC-independent recombinational process of DNA repair. It may act with RecF and RecO. This is Recombination protein RecR from Bacillus cytotoxicus (strain DSM 22905 / CIP 110041 / 391-98 / NVH 391-98).